The chain runs to 98 residues: Integration host factor subunit alpha (98 aa).

A compositionally biased stretch (basic and acidic residues) spans 53–69 (DLREKNERPGRNPKTGE). The tract at residues 53 to 72 (DLREKNERPGRNPKTGEDIP) is disordered.

Belongs to the bacterial histone-like protein family. Heterodimer of an alpha and a beta chain.

This protein is one of the two subunits of integration host factor, a specific DNA-binding protein that functions in genetic recombination as well as in transcriptional and translational control. The sequence is that of Integration host factor subunit alpha from Vibrio atlanticus (strain LGP32) (Vibrio splendidus (strain Mel32)).